A 349-amino-acid polypeptide reads, in one-letter code: Uroporphyrinogen decarboxylase (349 aa).

Residues 23–27, Asp-71, Tyr-148, Ser-203, and His-317 contribute to the substrate site; that span reads RQAGR.

This sequence belongs to the uroporphyrinogen decarboxylase family. In terms of assembly, homodimer.

It localises to the cytoplasm. It carries out the reaction uroporphyrinogen III + 4 H(+) = coproporphyrinogen III + 4 CO2. It functions in the pathway porphyrin-containing compound metabolism; protoporphyrin-IX biosynthesis; coproporphyrinogen-III from 5-aminolevulinate: step 4/4. Its function is as follows. Catalyzes the decarboxylation of four acetate groups of uroporphyrinogen-III to yield coproporphyrinogen-III. The protein is Uroporphyrinogen decarboxylase of Sorangium cellulosum (strain So ce56) (Polyangium cellulosum (strain So ce56)).